The primary structure comprises 232 residues: Thiamine import ATP-binding protein ThiQ (232 aa).

Residues 2–230 (LKLTDITWLY…KASASALLGI (229 aa)) form the ABC transporter domain. 32 to 39 (GPSGAGKS) serves as a coordination point for ATP.

This sequence belongs to the ABC transporter superfamily. Thiamine importer (TC 3.A.1.19.1) family. In terms of assembly, the complex is composed of two ATP-binding proteins (ThiQ), two transmembrane proteins (ThiP) and a solute-binding protein (ThiB).

It is found in the cell inner membrane. It carries out the reaction thiamine(out) + ATP + H2O = thiamine(in) + ADP + phosphate + H(+). Part of the ABC transporter complex ThiBPQ involved in thiamine import. Responsible for energy coupling to the transport system. In Shigella sonnei (strain Ss046), this protein is Thiamine import ATP-binding protein ThiQ.